Reading from the N-terminus, the 248-residue chain is Small ribosomal subunit protein uS2 (248 aa).

Belongs to the universal ribosomal protein uS2 family.

The sequence is that of Small ribosomal subunit protein uS2 from Thiobacillus denitrificans (strain ATCC 25259 / T1).